A 797-amino-acid polypeptide reads, in one-letter code: Complex I intermediate-associated protein 84, mitochondrial (797 aa).

A mitochondrion-targeting transit peptide spans Met1–Thr69.

Its subcellular location is the mitochondrion. Functionally, chaperone protein involved in the assembly of the mitochondrial NADH:ubiquinone oxidoreductase complex (complex I). This Neurospora crassa (strain ATCC 24698 / 74-OR23-1A / CBS 708.71 / DSM 1257 / FGSC 987) protein is Complex I intermediate-associated protein 84, mitochondrial (cia84).